Here is a 339-residue protein sequence, read N- to C-terminus: Transcription initiation factor IIB (339 aa).

A TFIIB-type zinc finger spans residues Glu-39 to Gln-70. The Zn(2+) site is built by Cys-43, Cys-46, Cys-62, and Cys-65. 2 consecutive repeat copies span residues Ser-156–Leu-239 and Asp-250–Glu-331.

Belongs to the TFIIB family.

Functionally, stabilizes TBP binding to an archaeal box-A promoter. Also responsible for recruiting RNA polymerase II to the pre-initiation complex (DNA-TBP-TFIIB). In Methanothermococcus thermolithotrophicus (Methanococcus thermolithotrophicus), this protein is Transcription initiation factor IIB.